The sequence spans 221 residues: 7-cyano-7-deazaguanine synthase (221 aa).

8–18 serves as a coordination point for ATP; it reads MSGGMDSTLCA. Cysteine 187, cysteine 195, cysteine 198, and cysteine 201 together coordinate Zn(2+).

This sequence belongs to the QueC family. Requires Zn(2+) as cofactor.

It catalyses the reaction 7-carboxy-7-deazaguanine + NH4(+) + ATP = 7-cyano-7-deazaguanine + ADP + phosphate + H2O + H(+). It functions in the pathway purine metabolism; 7-cyano-7-deazaguanine biosynthesis. Its function is as follows. Catalyzes the ATP-dependent conversion of 7-carboxy-7-deazaguanine (CDG) to 7-cyano-7-deazaguanine (preQ(0)). The chain is 7-cyano-7-deazaguanine synthase from Campylobacter concisus (strain 13826).